The following is a 358-amino-acid chain: DNA integrity scanning protein DisA (358 aa).

In terms of domain architecture, DAC spans 6–144 (RPTLREAVAR…RGERHVLTDS (139 aa)). Residues G73, L91, and 104 to 108 (TRHRS) each bind ATP.

Belongs to the DisA family. As to quaternary structure, homooctamer. Mg(2+) serves as cofactor.

It catalyses the reaction 2 ATP = 3',3'-c-di-AMP + 2 diphosphate. In terms of biological role, participates in a DNA-damage check-point. DisA forms globular foci that rapidly scan along the chromosomes searching for lesions. Functionally, also has diadenylate cyclase activity, catalyzing the condensation of 2 ATP molecules into cyclic di-AMP (c-di-AMP). c-di-AMP likely acts as a signaling molecule that may couple DNA integrity with a cellular process. The polypeptide is DNA integrity scanning protein DisA (Mycobacterium bovis (strain ATCC BAA-935 / AF2122/97)).